Reading from the N-terminus, the 396-residue chain is Enoyl-[acyl-carrier-protein] reductase [NADH] (396 aa).

NAD(+)-binding positions include 47–52, 73–74, 110–111, and 138–139; these read GASTGF, FE, DA, and LA. Tyr-224 serves as a coordination point for substrate. The active-site Proton donor is Tyr-234. NAD(+) contacts are provided by residues Lys-243 and 272 to 274; that span reads LVT.

It belongs to the TER reductase family. As to quaternary structure, monomer.

The enzyme catalyses a 2,3-saturated acyl-[ACP] + NAD(+) = a (2E)-enoyl-[ACP] + NADH + H(+). The protein operates within lipid metabolism; fatty acid biosynthesis. Its function is as follows. Involved in the final reduction of the elongation cycle of fatty acid synthesis (FAS II). Catalyzes the reduction of a carbon-carbon double bond in an enoyl moiety that is covalently linked to an acyl carrier protein (ACP). In Cytophaga hutchinsonii (strain ATCC 33406 / DSM 1761 / CIP 103989 / NBRC 15051 / NCIMB 9469 / D465), this protein is Enoyl-[acyl-carrier-protein] reductase [NADH].